A 67-amino-acid chain; its full sequence is Non-specific lipid-transfer protein 2P (67 aa).

Intrachain disulfides connect cysteine 2/cysteine 34, cysteine 10/cysteine 24, cysteine 25/cysteine 60, and cysteine 36/cysteine 67.

In terms of biological role, transfer lipids across membranes. May play a role in plant defense or in the biosynthesis of cuticle layers. The protein is Non-specific lipid-transfer protein 2P of Triticum aestivum (Wheat).